A 362-amino-acid chain; its full sequence is Molybdenum import ATP-binding protein ModC (362 aa).

Residues 4-238 enclose the ABC transporter domain; that stretch reads AGEAAIRARF…LDLPIRLGED (235 aa). 38–45 is an ATP binding site; it reads GHSGSGKT. Positions 297–362 constitute a Mop domain; the sequence is GTSILNTLPA…AQIKAVALVG (66 aa).

The protein belongs to the ABC transporter superfamily. Molybdate importer (TC 3.A.1.8) family. As to quaternary structure, the complex is composed of two ATP-binding proteins (ModC), two transmembrane proteins (ModB) and a solute-binding protein (ModA).

The protein resides in the cell inner membrane. The catalysed reaction is molybdate(out) + ATP + H2O = molybdate(in) + ADP + phosphate + H(+). Its function is as follows. Part of the ABC transporter complex ModABC involved in molybdenum import. Responsible for energy coupling to the transport system. In Thiobacillus denitrificans (strain ATCC 25259 / T1), this protein is Molybdenum import ATP-binding protein ModC.